A 464-amino-acid polypeptide reads, in one-letter code: Soluble pyridine nucleotide transhydrogenase (464 aa).

35 to 44 (DDRPQVGGNC) contacts FAD.

The protein belongs to the class-I pyridine nucleotide-disulfide oxidoreductase family. FAD serves as cofactor.

The protein resides in the cytoplasm. The enzyme catalyses NAD(+) + NADPH = NADH + NADP(+). Conversion of NADPH, generated by peripheral catabolic pathways, to NADH, which can enter the respiratory chain for energy generation. The polypeptide is Soluble pyridine nucleotide transhydrogenase (Azotobacter vinelandii (strain DJ / ATCC BAA-1303)).